Consider the following 158-residue polypeptide: UPF0262 protein RHOS4_22360 (158 aa).

Belongs to the UPF0262 family.

The protein is UPF0262 protein RHOS4_22360 of Cereibacter sphaeroides (strain ATCC 17023 / DSM 158 / JCM 6121 / CCUG 31486 / LMG 2827 / NBRC 12203 / NCIMB 8253 / ATH 2.4.1.) (Rhodobacter sphaeroides).